A 584-amino-acid chain; its full sequence is Arginine--tRNA ligase (584 aa).

A 'HIGH' region motif is present at residues 127-137 (PNTNKPLHIGH).

It belongs to the class-I aminoacyl-tRNA synthetase family. In terms of assembly, monomer.

Its subcellular location is the cytoplasm. It catalyses the reaction tRNA(Arg) + L-arginine + ATP = L-arginyl-tRNA(Arg) + AMP + diphosphate. This chain is Arginine--tRNA ligase, found in Borrelia hermsii (strain HS1 / DAH).